We begin with the raw amino-acid sequence, 252 residues long: MLAKRIIPCLDVKEGRVVKGVNFIGLQDVGDPVEIAALYNDAGADEIVFLDITATHEGRKTIIDVVEKTASKVFIPLTVGGGISSVKDMYNLLRAGADKVSINSAAVRNPKLIEEGAEHFGSQCIVVAIDARKVAEDKWNVYVNGGRVDTGIDAIGWAKCVTELGAGEILLTSMDADGTKNGYDLRLTEEISKSVSVPVIASGGCGHANHIIEVFQKTTVDAALAASIFHYGEATIGDVKRKLRNANVEVRL.

Active-site residues include Asp11 and Asp130.

The protein belongs to the HisA/HisF family. In terms of assembly, heterodimer of HisH and HisF.

It localises to the cytoplasm. It carries out the reaction 5-[(5-phospho-1-deoxy-D-ribulos-1-ylimino)methylamino]-1-(5-phospho-beta-D-ribosyl)imidazole-4-carboxamide + L-glutamine = D-erythro-1-(imidazol-4-yl)glycerol 3-phosphate + 5-amino-1-(5-phospho-beta-D-ribosyl)imidazole-4-carboxamide + L-glutamate + H(+). Its pathway is amino-acid biosynthesis; L-histidine biosynthesis; L-histidine from 5-phospho-alpha-D-ribose 1-diphosphate: step 5/9. In terms of biological role, IGPS catalyzes the conversion of PRFAR and glutamine to IGP, AICAR and glutamate. The HisF subunit catalyzes the cyclization activity that produces IGP and AICAR from PRFAR using the ammonia provided by the HisH subunit. This chain is Imidazole glycerol phosphate synthase subunit HisF, found in Bacillus cereus (strain AH187).